The sequence spans 478 residues: ATP-dependent DNA helicase RecQ (478 aa).

The region spanning 28–202 (IDCLLARRDC…VEGLNLRSPE (175 aa)) is the Helicase ATP-binding domain. 41–48 (LPTGGGKS) lines the ATP pocket. A DEAH box motif is present at residues 142-145 (DEAH). The region spanning 229 to 380 (QLRRFLLKHL…RAEVLSQQIP (152 aa)) is the Helicase C-terminal domain. Residues C447, C467, C470, and C473 each contribute to the Zn(2+) site.

Belongs to the helicase family. RecQ subfamily. It depends on Mg(2+) as a cofactor. Zn(2+) is required as a cofactor.

It catalyses the reaction Couples ATP hydrolysis with the unwinding of duplex DNA by translocating in the 3'-5' direction.. The catalysed reaction is ATP + H2O = ADP + phosphate + H(+). An ATP-dependent DNA helicase which unwinds DNA in a 3'-5' direction. This is ATP-dependent DNA helicase RecQ from Synechocystis sp. (strain ATCC 27184 / PCC 6803 / Kazusa).